Here is a 178-residue protein sequence, read N- to C-terminus: ATP-dependent protease subunit HslV (178 aa).

Threonine 2 is a catalytic residue. Residues glycine 157, cysteine 160, and threonine 163 each coordinate Na(+).

It belongs to the peptidase T1B family. HslV subfamily. As to quaternary structure, a double ring-shaped homohexamer of HslV is capped on each side by a ring-shaped HslU homohexamer. The assembly of the HslU/HslV complex is dependent on binding of ATP.

Its subcellular location is the cytoplasm. It catalyses the reaction ATP-dependent cleavage of peptide bonds with broad specificity.. Its activity is regulated as follows. Allosterically activated by HslU binding. In terms of biological role, protease subunit of a proteasome-like degradation complex believed to be a general protein degrading machinery. This chain is ATP-dependent protease subunit HslV, found in Hamiltonella defensa subsp. Acyrthosiphon pisum (strain 5AT).